Here is a 1679-residue protein sequence, read N- to C-terminus: Furin-like protease 2 (1679 aa).

Over residues 1–10 the composition is skewed to polar residues; sequence MSNTTRSSRV. A disordered region spans residues 1–42; that stretch reads MSNTTRSSRVTIGRIGTTPQITDPWSSGLEKQRPSRCGGPKS. Residues asparagine 3, asparagine 109, and asparagine 130 are each glycosylated (N-linked (GlcNAc...) asparagine). Positions 139–164 are disordered; it reads VSSLHSSRRTNPPSSSSSSSSNVDVD. Residues 147–160 show a composition bias toward low complexity; that stretch reads RTNPPSSSSSSSSN. Asparagine 205 carries an N-linked (GlcNAc...) asparagine glycan. In terms of domain architecture, Peptidase S8 spans 383–705; sequence QWYLNGGAKD…YGLMDAGAMV (323 aa). Aspartate 417 functions as the Charge relay system in the catalytic mechanism. Positions 424 to 456 are disordered; it reads HPDLAQNYDPEASFDINGNDSDPTPQDNGDNKH. Over residues 439-451 the composition is skewed to polar residues; the sequence is INGNDSDPTPQDN. Residue asparagine 442 is glycosylated (N-linked (GlcNAc...) asparagine). Histidine 456 functions as the Charge relay system in the catalytic mechanism. Cystine bridges form between cysteine 473/cysteine 629 and cysteine 565/cysteine 595. N-linked (GlcNAc...) asparagine glycosylation is present at asparagine 480. The Charge relay system role is filled by serine 637. The 139-residue stretch at 714-852 folds into the P/Homo B domain; sequence VPPQHICKSR…QLIFYGTSTQ (139 aa). Cysteine 720 and cysteine 748 form a disulfide bridge. Asparagine 927 carries an N-linked (GlcNAc...) asparagine glycan. 10 FU repeats span residues 961–1006, 1009–1056, 1060–1104, 1107–1152, 1156–1204, 1208–1253, 1256–1299, 1301–1346, 1348–1393, and 1396–1443; these read KKIL…RSFP, VGIC…GYFE, NRTC…DTYE, DNKC…GFYA, RLEC…SEFY, EGQC…GFFV, GSLC…GYYS, RGIC…GFYK, DFGC…QYYD, and SATC…QTLA. Asparagine 1060 carries an N-linked (GlcNAc...) asparagine glycan. N-linked (GlcNAc...) asparagine glycosylation is present at asparagine 1181. N-linked (GlcNAc...) asparagine glycans are attached at residues asparagine 1274 and asparagine 1277. An N-linked (GlcNAc...) asparagine glycan is attached at asparagine 1439. The helical transmembrane segment at 1512–1532 threads the bilayer; the sequence is AIAVAICLLIITIFSIIFAVL. Over 1533-1679 the chain is Cytoplasmic; sequence QRNSNHVSRN…STTSRTNIRS (147 aa). A disordered region spans residues 1660–1679; the sequence is TNAERKNHPSSTTSRTNIRS. The segment covering 1668–1679 has biased composition (polar residues); the sequence is PSSTTSRTNIRS.

This sequence belongs to the peptidase S8 family. Furin subfamily. Ca(2+) is required as a cofactor. As to expression, transient expression in a subset of central nervous system neurons during embryonic stages 12-13. Expression in developing tracheal tree from stage 13 to end of embryonic development.

The protein localises to the membrane. It carries out the reaction Release of mature proteins from their proproteins by cleavage of -Arg-Xaa-Yaa-Arg-|-Zaa- bonds, where Xaa can be any amino acid and Yaa is Arg or Lys. Releases albumin, complement component C3 and von Willebrand factor from their respective precursors.. Furin is likely to represent the ubiquitous endoprotease activity within constitutive secretory pathways and capable of cleavage at the RX(K/R)R consensus motif. This is Furin-like protease 2 (Fur2) from Drosophila melanogaster (Fruit fly).